The following is a 154-amino-acid chain: Protein X (154 aa).

A mitochondrial targeting sequence region spans residues 68–117 (PCALRFTSARCMETTVNAPRNLPKVLHKRTLGLSAMSTTKIETYFKDCVF).

The protein belongs to the orthohepadnavirus protein X family. As to quaternary structure, may form homodimer. May interact with host CEBPA, CFLAR, CREB1, DDB1, E4F1, HBXIP, HSPD1/HSP60, NFKBIA, POLR2E and SMAD4. Interacts with host SMC5-SMC6 complex and induces its degradation. Interacts with host TRPC4AP; leading to prevent ubiquitination of TRPC4AP. Interacts with host PLSCR1; this interaction promotes ubiquitination and degradation of HBx and impairs HBx-mediated cell proliferation. In terms of processing, a fraction may be phosphorylated in insect cells and HepG2 cells, a human hepatoblastoma cell line. Phosphorylated in vitro by host protein kinase C or mitogen-activated protein kinase. N-acetylated in insect cells.

It localises to the host cytoplasm. The protein resides in the host nucleus. The protein localises to the host mitochondrion. Functionally, multifunctional protein that plays a role in silencing host antiviral defenses and promoting viral transcription. Does not seem to be essential for HBV infection. May be directly involved in development of cirrhosis and liver cancer (hepatocellular carcinoma). Most of cytosolic activities involve modulation of cytosolic calcium. The effect on apoptosis is controversial depending on the cell types in which the studies have been conducted. May induce apoptosis by localizing in mitochondria and causing loss of mitochondrial membrane potential. May also modulate apoptosis by binding host CFLAR, a key regulator of the death-inducing signaling complex (DISC). Promotes viral transcription by using the host E3 ubiquitin ligase DDB1 to target the SMC5-SMC6 complex to proteasomal degradation. This host complex would otherwise bind to viral episomal DNA, and prevents its transcription. Moderately stimulates transcription of many different viral and cellular transcription elements. Promoters and enhancers stimulated by HBx contain DNA binding sites for NF-kappa-B, AP-1, AP-2, c-EBP, ATF/CREB, or the calcium-activated factor NF-AT. The chain is Protein X from Chimpanzee hepatitis B virus (isolate United Kingdom/LSH/1988) (HBVcpz).